We begin with the raw amino-acid sequence, 413 residues long: Paxillin homolog 1 (413 aa).

Over residues His33–Phe45 the composition is skewed to basic and acidic residues. The tract at residues His33 to Thr157 is disordered. The span at Tyr49–Pro69 shows a compositional bias: polar residues. Basic and acidic residues predominate over residues Arg73 to Ser92. The segment covering Ala118–Ser143 has biased composition (polar residues). LIM zinc-binding domains lie at Gly174–Ser232, Pro233–Pro292, Lys293–Gly350, and Ser351–Leu410.

The protein belongs to the paxillin family. As to expression, isoform a: Expressed in all 95 body wall muscle cells as well as in the pharyngeal muscle cells (at protein level). Isoform c: Expressed in the body wall muscle cells and in the pharyngeal muscle cells.

It is found in the cell junction. Its subcellular location is the adherens junction. It localises to the cell membrane. The protein resides in the cytoplasm. The protein localises to the myofibril. It is found in the sarcomere. Its subcellular location is the m line. It localises to the cell projection. The protein resides in the podosome. Its function is as follows. Required for myofilament organization of the pharyngeal sarcomeres and for pharyngeal muscle contractions and hence for pharyngeal pumping. Together with lin-8, might be required for myofilament organization in the body wall muscles. The polypeptide is Paxillin homolog 1 (pxl-1) (Caenorhabditis elegans).